The following is a 404-amino-acid chain: Tryptophan synthase beta chain (404 aa).

Lys-94 is subject to N6-(pyridoxal phosphate)lysine.

This sequence belongs to the TrpB family. As to quaternary structure, tetramer of two alpha and two beta chains. Requires pyridoxal 5'-phosphate as cofactor.

The enzyme catalyses (1S,2R)-1-C-(indol-3-yl)glycerol 3-phosphate + L-serine = D-glyceraldehyde 3-phosphate + L-tryptophan + H2O. Its pathway is amino-acid biosynthesis; L-tryptophan biosynthesis; L-tryptophan from chorismate: step 5/5. In terms of biological role, the beta subunit is responsible for the synthesis of L-tryptophan from indole and L-serine. The protein is Tryptophan synthase beta chain of Staphylococcus aureus (strain USA300).